The chain runs to 441 residues: Deoxyguanosinetriphosphate triphosphohydrolase-like protein (441 aa).

The region spanning 62–255 is the HD domain; it reads RLTHSLEAAQ…MELADDIAYG (194 aa).

This sequence belongs to the dGTPase family. Type 2 subfamily.

The protein is Deoxyguanosinetriphosphate triphosphohydrolase-like protein (dgt) of Vibrio cholerae serotype O1 (strain ATCC 39541 / Classical Ogawa 395 / O395).